Reading from the N-terminus, the 297-residue chain is Cbb3-type cytochrome c oxidase subunit CcoP (297 aa).

Topologically, residues M1–T35 are cytoplasmic. Residues F36–F56 form a helical membrane-spanning segment. At S57 to Q297 the chain is on the periplasmic side. 2 Cytochrome c domains span residues Y108–S199 and V206–G294. The heme c site is built by C121, C124, H125, M174, C219, C222, H223, and M264.

The protein belongs to the CcoP / FixP family. Component of the cbb3-type cytochrome c oxidase at least composed of CcoN, CcoO, CcoQ and CcoP. Interacts with CcoQ. Heme c serves as cofactor.

It is found in the cell inner membrane. Its pathway is energy metabolism; oxidative phosphorylation. Functionally, C-type cytochrome. Part of the cbb3-type cytochrome c oxidase complex. CcoP subunit is required for transferring electrons from donor cytochrome c via its heme groups to CcoO subunit. From there, electrons are shuttled to the catalytic binuclear center of CcoN subunit where oxygen reduction takes place. The complex also functions as a proton pump. This chain is Cbb3-type cytochrome c oxidase subunit CcoP, found in Rhodobacter capsulatus (Rhodopseudomonas capsulata).